Here is a 311-residue protein sequence, read N- to C-terminus: UPF0324 membrane protein VV1_3166 (311 aa).

A run of 10 helical transmembrane segments spans residues 8-28, 51-71, 74-94, 106-126, 133-153, 165-185, 197-217, 228-248, 256-276, and 289-309; these read FIFA…ALVL, LLSY…AIAV, DGIG…FLVA, LISA…APAI, IALA…IFPV, FGTW…AASA, LKLA…ILFA, LVLP…DLFP, GIFS…GCSI, and LIFG…WLLL.

This sequence belongs to the UPF0324 family.

The protein resides in the cell membrane. This Vibrio vulnificus (strain CMCP6) protein is UPF0324 membrane protein VV1_3166.